Reading from the N-terminus, the 464-residue chain is Glutathione reductase (464 aa).

Residues S17 and G18 each contribute to the FAD site. S17 is a glutathione binding site. R24 provides a ligand contact to glutathione. Residues E37, T45, C46, and K54 each coordinate FAD. Cysteines 46 and 51 form a disulfide. Y103 lines the glutathione pocket. FAD is bound at residue A119. Residues A186, I189, E192, R209, R215, and G274 each contribute to the NADP(+) site. D315 is an FAD binding site. An NADP(+)-binding site is contributed by E321. T323 contributes to the FAD binding site. R331 serves as a coordination point for glutathione. V354 provides a ligand contact to NADP(+). H453 serves as a coordination point for FAD. The Proton acceptor role is filled by H453.

The protein belongs to the class-I pyridine nucleotide-disulfide oxidoreductase family. In terms of assembly, homodimer. The cofactor is FAD.

Its subcellular location is the cytoplasm. It localises to the mitochondrion. The enzyme catalyses 2 glutathione + NADP(+) = glutathione disulfide + NADPH + H(+). Functionally, catalyzes the reduction of glutathione disulfide (GSSG) to reduced glutathione (GSH). Constitutes the major mechanism to maintain a high GSH:GSSG ratio in the cytosol. The protein is Glutathione reductase (pgr1) of Schizosaccharomyces pombe (strain 972 / ATCC 24843) (Fission yeast).